Here is a 366-residue protein sequence, read N- to C-terminus: Prostaglandin F2-alpha receptor (366 aa).

The Extracellular segment spans residues 1-31; it reads MSMNSSKQPVSPAAGLIANTTCQTENRLSVF. 2 N-linked (GlcNAc...) asparagine glycosylation sites follow: N4 and N19. The chain crosses the membrane as a helical span at residues 32-55; that stretch reads FSIIFMTVGILSNSLAIAILMKAY. The Cytoplasmic portion of the chain corresponds to 56 to 69; that stretch reads QRFRQKSKASFLLL. Residues 70-90 traverse the membrane as a helical segment; sequence ASGLVITDFFGHLINGGIAVF. Residues 91 to 109 are Extracellular-facing; that stretch reads VYASDKDWIRFDQSNILCS. An intrachain disulfide couples C108 to C186. Residues 110–131 form a helical membrane-spanning segment; that stretch reads IFGISMVFSGLCPLFLGSAMAI. Residues 132 to 152 lie on the Cytoplasmic side of the membrane; that stretch reads ERCIGVTNPIFHSTKITSKHV. The helical transmembrane segment at 153–175 threads the bilayer; it reads KMILSGVCMFAVFVAVLPILGHR. The Extracellular portion of the chain corresponds to 176–198; that stretch reads DYQIQASRTWCFYNTEHIEDWED. Residues 199 to 224 traverse the membrane as a helical segment; it reads RFYLLFFSFLGLLALGVSFSCNAVTG. Over 225–250 the chain is Cytoplasmic; that stretch reads VTLLRVKFRSQQHRQGRSHHLEMIIQ. The helical transmembrane segment at 251 to 267 threads the bilayer; the sequence is LLAIMCVSCVCWSPFLV. At 268 to 285 the chain is on the extracellular side; that stretch reads TMANIAINGNNSPVTCET. The helical transmembrane segment at 286–307 threads the bilayer; sequence TLFALRMATWNQILDPWVYILL. Topologically, residues 308-366 are cytoplasmic; that stretch reads RKAVLRNLYKLASRCCGVNIISLHIWELSSIKNSLKVAAISESPAAEKESQQASSEAGL.

This sequence belongs to the G-protein coupled receptor 1 family.

The protein localises to the cell membrane. Receptor for prostaglandin F2-alpha (PGF2-alpha). The activity of this receptor is mediated by G proteins which activate a phosphatidylinositol-calcium second messenger system. Initiates luteolysis in the corpus luteum. This chain is Prostaglandin F2-alpha receptor (Ptgfr), found in Mus musculus (Mouse).